Consider the following 366-residue polypeptide: ABI gene family member 3 (366 aa).

The stretch at 33–61 (CEDNYVQATDKRKALEETMAFTTQALASV) forms a coiled coil. The interval 161-195 (SRTGTLSRKSIKAPATPASATLGRPPRIPEPVHLP) is disordered. Phosphoserine occurs at positions 213 and 216. The interval 215–302 (GSAEGVGGAP…PPPGFGPDEP (88 aa)) is disordered. Pro residues predominate over residues 232-248 (PPAPPLPSSLDPPPPPA). The SH3 domain maps to 308–366 (SYLEKVVTLYPYTSQKDNELSFSEGTVICVTRRYSDGWCEGVSSEGTGFFPGNYVEPSC). Position 342 is a phosphoserine (Ser-342).

It belongs to the ABI family. As to quaternary structure, may interact with PAK1 and PAK2. Probably interacts with TARSH. Expressed in heart, lung, liver, pancreas, kidney, placenta and at low levels in brain and skeletal muscle.

The protein resides in the cytoplasm. Functionally, may inhibit tumor metastasis. In vitro, reduces cell motility. The protein is ABI gene family member 3 (ABI3) of Homo sapiens (Human).